We begin with the raw amino-acid sequence, 336 residues long: MATIKDVAKLAGVSTTTVSHVINKTRFVAEDTSKAVWDAIQQLNYSPSAVARSLKVNTTKSIGMIITTSEAPYFAEIVLAVEEHCYQQGYSLFLCNTQNEPEKIQNHLDMLIKKRVDGVLVMCSEYTRDSLELFNGTNIPMVVMDWGKADDHSDRILDNSFEGGYLATQHLIENGHKDIGVIAGHLSKTLSKERYEGFLKAMHEANLPVRQEWIYEGDFEPESGFEQMNNLLRLEKLPTAIFCFSDTIALGAISALSEKGLSVPSDMSIIGYDNIHSSRFYSPPLTTIHQSKSRLGVKALNILLERIKIDKTQYQPQTIEFHPELVLRRSVRNLNK.

An HTH lacI-type domain is found at 2-56 (ATIKDVAKLAGVSTTTVSHVINKTRFVAEDTSKAVWDAIQQLNYSPSAVARSLKV). Positions 4-23 (IKDVAKLAGVSTTTVSHVIN) form a DNA-binding region, H-T-H motif. A DNA-binding region spans residues 48-56 (SAVARSLKV). Positions 73, 188, 219, and 273 each coordinate hypoxanthine.

As to quaternary structure, homodimer.

It functions in the pathway purine metabolism; purine nucleotide biosynthesis [regulation]. Functionally, is the main repressor of the genes involved in the de novo synthesis of purine nucleotides, regulating purB, purC, purEK, purF, purHD, purL, purMN and guaBA expression. PurR is allosterically activated to bind its cognate DNA by binding the purine corepressors, hypoxanthine or guanine, thereby effecting transcription repression. The polypeptide is HTH-type transcriptional repressor PurR (Actinobacillus pleuropneumoniae serotype 3 (strain JL03)).